The chain runs to 330 residues: Uracil-DNA glycosylase, mitochondrial (330 aa).

A mitochondrion-targeting transit peptide spans 1–49 (MASSTPKTLMDFFQPAKRLKASPSSSSFPAVSVAGGSRDLGSVANSPPR). The active-site Proton acceptor is Asp173.

It belongs to the uracil-DNA glycosylase (UDG) superfamily. UNG family.

The protein localises to the mitochondrion. The catalysed reaction is Hydrolyzes single-stranded DNA or mismatched double-stranded DNA and polynucleotides, releasing free uracil.. Its activity is regulated as follows. Inhidited by the small peptide uracil-DNA-glycosylase inhibitor (Ugi). In terms of biological role, excises uracil residues from the DNA which can arise as a result of misincorporation of dUMP residues by DNA polymerase or due to deamination of cytosine. More active on U:G, U:T and U:C mispairs than on U:A pairs. Highly specific for uracil and no activity with 5-substituted uracil or cytosine derivatives. Required for initiation of base excision repair (BER) of uracil. This is Uracil-DNA glycosylase, mitochondrial from Arabidopsis thaliana (Mouse-ear cress).